The primary structure comprises 277 residues: MEMO1 family protein TRQ2_0860 (277 aa).

Belongs to the MEMO1 family.

The chain is MEMO1 family protein TRQ2_0860 from Thermotoga sp. (strain RQ2).